A 203-amino-acid chain; its full sequence is Dual-action ribosomal maturation protein DarP (203 aa).

2 disordered regions span residues 1-31 (MTRK…SQLK) and 178-203 (NADG…DRDA). Over residues 21 to 31 (GYDRPSKSQLK) the composition is skewed to basic and acidic residues. A compositionally biased stretch (acidic residues) spans 188–203 (SEADDAQDDEDDDRDA).

This sequence belongs to the DarP family.

Its subcellular location is the cytoplasm. Its function is as follows. Member of a network of 50S ribosomal subunit biogenesis factors which assembles along the 30S-50S interface, preventing incorrect 23S rRNA structures from forming. Promotes peptidyl transferase center (PTC) maturation. The protein is Dual-action ribosomal maturation protein DarP of Paraburkholderia xenovorans (strain LB400).